The following is a 158-amino-acid chain: uncharacterized protein (158 aa).

This is an uncharacterized protein from Saccharolobus islandicus (Sulfolobus islandicus).